Here is a 408-residue protein sequence, read N- to C-terminus: CinA-like protein (408 aa).

This sequence belongs to the CinA family.

The chain is CinA-like protein from Anaeromyxobacter dehalogenans (strain 2CP-C).